Consider the following 125-residue polypeptide: Large ribosomal subunit protein bL17 (125 aa).

The protein belongs to the bacterial ribosomal protein bL17 family. In terms of assembly, part of the 50S ribosomal subunit. Contacts protein L32.

The protein is Large ribosomal subunit protein bL17 of Syntrophus aciditrophicus (strain SB).